Consider the following 243-residue polypeptide: Aldehyde decarbonylase (243 aa).

Glu45, Glu73, His76, Glu128, and His160 together coordinate Fe cation.

This sequence belongs to the aldehyde decarbonylase family. Binds 2 metal cations per subunit. The catalytic dinuclear metal-binding site could be either a di-iron or a manganese-iron cofactor. is required as a cofactor.

It carries out the reaction a long-chain fatty aldehyde + 2 NADPH + O2 + H(+) = a long-chain alkane + formate + 2 NADP(+) + H2O. Functionally, catalyzes the decarbonylation of fatty aldehydes to alkanes. Requires the presence of ferredoxin, ferredoxin reductase and NADPH for in vitro decarbonylase activity. Involved in the biosynthesis of alkanes, mainly heptadecane and pentadecane. This Prochlorococcus marinus (strain MIT 9313) protein is Aldehyde decarbonylase.